Consider the following 230-residue polypeptide: Small ribosomal subunit protein uS3 (230 aa).

The KH type-2 domain occupies 39-107 (VRKYLADKLQ…PAQINIAEIR (69 aa)).

This sequence belongs to the universal ribosomal protein uS3 family. In terms of assembly, part of the 30S ribosomal subunit. Forms a tight complex with proteins S10 and S14.

Its function is as follows. Binds the lower part of the 30S subunit head. Binds mRNA in the 70S ribosome, positioning it for translation. This is Small ribosomal subunit protein uS3 from Shewanella oneidensis (strain ATCC 700550 / JCM 31522 / CIP 106686 / LMG 19005 / NCIMB 14063 / MR-1).